A 151-amino-acid polypeptide reads, in one-letter code: UPF0719 transmembrane protein MAP_1032c (151 aa).

4 consecutive transmembrane segments (helical) span residues 20-40 (VATI…FYAV), 60-80 (AVVV…TAIA), 90-110 (LVGV…ALLA), and 130-150 (PGSF…AAAV).

This sequence belongs to the UPF0719 family.

Its subcellular location is the cell membrane. The chain is UPF0719 transmembrane protein MAP_1032c from Mycolicibacterium paratuberculosis (strain ATCC BAA-968 / K-10) (Mycobacterium paratuberculosis).